Reading from the N-terminus, the 179-residue chain is CASP-like protein 1F1 (179 aa).

Residues 1-16 (MENVEDKYNSPLKSQK) are Cytoplasmic-facing. A helical membrane pass occupies residues 17–37 (LFIGAQICLRIVTIGATLAAT). Topologically, residues 38-65 (WIMVTDKQSITFGDFVMVAKYNYSSAFK) are extracellular. An N-linked (GlcNAc...) asparagine glycan is attached at Asn59. A helical transmembrane segment spans residues 66–86 (FFVLANVIACACSVVSLLFLC). At 87-105 (ALGRYSSNPGHVFLLFLHD) the chain is on the cytoplasmic side. A helical transmembrane segment spans residues 106–126 (LLMMSLVLAGCSAATAIGFLG). Residues 127–150 (KYGNTKSGWMPICDQFGQFCNRGT) lie on the Extracellular side of the membrane. The chain crosses the membrane as a helical span at residues 151-171 (ISMMLSYLSMVCLLILTVTSA). At 172–179 (NKSRQIHV) the chain is on the cytoplasmic side.

The protein belongs to the Casparian strip membrane proteins (CASP) family. Homodimer and heterodimers.

It localises to the cell membrane. The sequence is that of CASP-like protein 1F1 from Ricinus communis (Castor bean).